Consider the following 210-residue polypeptide: Proline-rich protein 20G (210 aa).

Over residues 1-11 the composition is skewed to basic residues; the sequence is MEEPRHSKRPR. The disordered stretch occupies residues 1–82; sequence MEEPRHSKRP…GGSWRAGRGR (82 aa). The span at 69–82 shows a compositional bias: gly residues; that stretch reads GQRGGGSWRAGRGR.

It belongs to the PRR20 family.

The chain is Proline-rich protein 20G from Homo sapiens (Human).